The following is a 747-amino-acid chain: MNGPPDRVDFKPMGPHHGGSFRPMGFAYDDGFRPMGPNGGVGGEGTRSIVGARYNYPAKYPPSESPDRRRFIGKAMESDYSVRPTTPPVQQPLSGQKRGYPISDHGSFTGTDVSDRSSTVKLFVGSVPRTATEEEIRPYFEQHGNVLEVALIKDKRTGQQQGCCFVKYATSKDADRAIRALHNQITLPGGTGPVQVRYADGERERIGTLEFKLFVGSLNKQATEKEVEEIFLQFGHVEDVYLMRDEYRQSRGCGFVKYSSKETAMAAIDGLNGTYTMRGCNQPLIVRFAEPKRPKPGESREMAPPVGLGSGPRFQASGPRPTSNFGDSSGDVSHTNPWRPATSRNVGPPSNTGIRGAGSDFSPKPGQATLPSNQGGPLGGYGVPPLNPLPVPGVSSSATLQQQNRAAGQHITPLKKPLHSPQGLPLPLRPQTNFPGAQAPLQNPYAYSSQLPTSQLPPQQNISRATAPQTPLNINLRPTTVSSATVQFPPRSQQQPLQKMQHPPSELAQLLSQQTQSLQATFQSSQQAISQLQQQVQSMQQPNQNLPLSQNGRAGKQQWAGSAIPRVASTTGSTPVSYVQTAAPAVSQSVGSVKCTWTEHTSPDGFKYYYNGLTGESKWEKPEEMIVFEREQQKQQQHQEKPTIQQSQTQLQPLQQQPQQVQQQYQGQQLQQPFYSSLYPTPGASHNTQYPSLPVGQNSQFPMSGIGQNAQDYARTHIPVGAASMNDISRTQQSRQSPQELMWKNKA.

The segment at 80–101 (YSVRPTTPPVQQPLSGQKRGYP) is disordered. RRM domains lie at 120-201 (VKLF…YADG) and 211-291 (FKLF…FAEP). A compositionally biased stretch (basic and acidic residues) spans 291-301 (PKRPKPGESRE). The segment at 291–503 (PKRPKPGESR…QQPLQKMQHP (213 aa)) is disordered. Composition is skewed to polar residues over residues 320-353 (RPTSNFGDSSGDVSHTNPWRPATSRNVGPPSNTG) and 395-406 (SSSATLQQQNRA). Positions 448–460 (SSQLPTSQLPPQQ) are enriched in low complexity. Residues 461–498 (NISRATAPQTPLNINLRPTTVSSATVQFPPRSQQQPLQ) show a composition bias toward polar residues. The region spanning 591-624 (GSVKCTWTEHTSPDGFKYYYNGLTGESKWEKPEE) is the WW domain. Basic and acidic residues predominate over residues 630-641 (REQQKQQQHQEK). Disordered stretches follow at residues 630-707 (REQQ…SGIG) and 722-747 (AASMNDISRTQQSRQSPQELMWKNKA). A compositionally biased stretch (low complexity) spans 642 to 673 (PTIQQSQTQLQPLQQQPQQVQQQYQGQQLQQP). Composition is skewed to polar residues over residues 674–707 (FYSSLYPTPGASHNTQYPSLPVGQNSQFPMSGIG) and 726–739 (NDISRTQQSRQSPQ).

As to quaternary structure, interacts (via C-terminus) with SWI3B and (via WW domain) with FY (via PPLPP motifs). In terms of tissue distribution, constitutively expressed, but the negative feedback maintains the active isoform a low level throughout much of the plant, except in meristematic cells at a specific time in development.

It localises to the nucleus. Functionally, plays a major role in the promotion of the transition of the vegetative meristem to reproductive development. Plays a role in the regulation of flowering time in the autonomous flowering pathway by decreasing FLOWERING LOCUS C mRNA levels. Required for RNA-mediated chromatin silencing of a range of loci in the genome. Cotranscriptionally recognizes aberrant RNA and marks it for silencing. Controls alternative cleavage and polyadenylation on pre-mRNAs and antisense RNAs. Acts redundantly with FPA to prevent the expression of distally polyadenylated antisense RNAs at the FLC locus. The sequence is that of Flowering time control protein FCA (FCA) from Arabidopsis thaliana (Mouse-ear cress).